A 343-amino-acid chain; its full sequence is F17e-G fimbrial adhesin (343 aa).

The N-terminal stretch at 1-22 (MTNFYKVFLAVFILVCCNISHA) is a signal peptide. Residues 23–199 (AVSFIGSTEN…LNPFTLNDTV (177 aa)) are receptor-binding lectin domain. A carbohydrate contacts are provided by residues 65 to 66 (AN), 110 to 111 (DT), and 138 to 141 (STQG). A disulfide bond links Cys75 and Cys132. Residues 200-343 (TSCRLLTPSA…GISTFTFSYQ (144 aa)) are fimbrillin-binding domain. The interval 287–307 (LKFGPDSPVKGNENQWQLSTG) is disordered. Residues 298–307 (NENQWQLSTG) are compositionally biased toward polar residues.

It belongs to the fimbrial protein family.

It localises to the fimbrium. Its function is as follows. Essential fimbrial adhesion factor that mediates binding to N-acetylglucosamine-containing receptors in the host intestinal microvilli, leading to colonization of the intestinal tissue, and diarrhea or septicemia. Also confers adhesiveness to laminin and basement membranes. This is F17e-G fimbrial adhesin (f17eG) from Escherichia coli.